The primary structure comprises 306 residues: Elongation factor Ts (306 aa).

An involved in Mg(2+) ion dislocation from EF-Tu region spans residues 80-83 (TDFV).

The protein belongs to the EF-Ts family.

It is found in the cytoplasm. Functionally, associates with the EF-Tu.GDP complex and induces the exchange of GDP to GTP. It remains bound to the aminoacyl-tRNA.EF-Tu.GTP complex up to the GTP hydrolysis stage on the ribosome. This chain is Elongation factor Ts, found in Clostridium acetobutylicum (strain ATCC 824 / DSM 792 / JCM 1419 / IAM 19013 / LMG 5710 / NBRC 13948 / NRRL B-527 / VKM B-1787 / 2291 / W).